A 95-amino-acid polypeptide reads, in one-letter code: Protein FAM240C (95 aa).

Residues 68 to 95 form a disordered region; the sequence is KMLQGPGRCPDRVPEATESLHTKDKKAA. The segment covering 76–95 has biased composition (basic and acidic residues); the sequence is CPDRVPEATESLHTKDKKAA.

It belongs to the FAM240 family.

The sequence is that of Protein FAM240C (FAM240C) from Homo sapiens (Human).